A 698-amino-acid chain; its full sequence is Elongation factor G 1 (698 aa).

Positions glutamate 8–isoleucine 290 constitute a tr-type G domain. GTP-binding positions include alanine 17 to threonine 24, aspartate 88 to histidine 92, and asparagine 142 to aspartate 145.

Belongs to the TRAFAC class translation factor GTPase superfamily. Classic translation factor GTPase family. EF-G/EF-2 subfamily.

It is found in the cytoplasm. Its function is as follows. Catalyzes the GTP-dependent ribosomal translocation step during translation elongation. During this step, the ribosome changes from the pre-translocational (PRE) to the post-translocational (POST) state as the newly formed A-site-bound peptidyl-tRNA and P-site-bound deacylated tRNA move to the P and E sites, respectively. Catalyzes the coordinated movement of the two tRNA molecules, the mRNA and conformational changes in the ribosome. The sequence is that of Elongation factor G 1 from Shewanella frigidimarina (strain NCIMB 400).